The sequence spans 157 residues: SsrA-binding protein (157 aa).

The interval 133 to 157 is disordered; it reads LHDKRETEKKRDWSREKGRLLRARG. Basic and acidic residues predominate over residues 135–151; the sequence is DKRETEKKRDWSREKGR.

It belongs to the SmpB family.

The protein resides in the cytoplasm. In terms of biological role, required for rescue of stalled ribosomes mediated by trans-translation. Binds to transfer-messenger RNA (tmRNA), required for stable association of tmRNA with ribosomes. tmRNA and SmpB together mimic tRNA shape, replacing the anticodon stem-loop with SmpB. tmRNA is encoded by the ssrA gene; the 2 termini fold to resemble tRNA(Ala) and it encodes a 'tag peptide', a short internal open reading frame. During trans-translation Ala-aminoacylated tmRNA acts like a tRNA, entering the A-site of stalled ribosomes, displacing the stalled mRNA. The ribosome then switches to translate the ORF on the tmRNA; the nascent peptide is terminated with the 'tag peptide' encoded by the tmRNA and targeted for degradation. The ribosome is freed to recommence translation, which seems to be the essential function of trans-translation. The protein is SsrA-binding protein of Bradyrhizobium diazoefficiens (strain JCM 10833 / BCRC 13528 / IAM 13628 / NBRC 14792 / USDA 110).